Reading from the N-terminus, the 464-residue chain is Fumarate hydratase class II (464 aa).

Substrate contacts are provided by residues 98-100 (SGT), 129-132 (HPND), 139-141 (SSN), and Thr187. Residue His188 is the Proton donor/acceptor of the active site. Residue Ser318 is part of the active site. Substrate contacts are provided by residues Ser319 and 324–326 (KVN).

Belongs to the class-II fumarase/aspartase family. Fumarase subfamily. In terms of assembly, homotetramer.

It is found in the cytoplasm. It carries out the reaction (S)-malate = fumarate + H2O. Its pathway is carbohydrate metabolism; tricarboxylic acid cycle; (S)-malate from fumarate: step 1/1. Involved in the TCA cycle. Catalyzes the stereospecific interconversion of fumarate to L-malate. The polypeptide is Fumarate hydratase class II (Haemophilus influenzae (strain ATCC 51907 / DSM 11121 / KW20 / Rd)).